Consider the following 264-residue polypeptide: ATP synthase subunit a (264 aa).

A run of 6 helical transmembrane segments spans residues threonine 29–phenylalanine 49, asparagine 87–methionine 107, aspartate 134–isoleucine 154, isoleucine 177–leucine 197, leucine 208–valine 228, and leucine 235–valine 255.

This sequence belongs to the ATPase A chain family. In terms of assembly, F-type ATPases have 2 components, CF(1) - the catalytic core - and CF(0) - the membrane proton channel. CF(1) has five subunits: alpha(3), beta(3), gamma(1), delta(1), epsilon(1). CF(0) has three main subunits: a(1), b(2) and c(9-12). The alpha and beta chains form an alternating ring which encloses part of the gamma chain. CF(1) is attached to CF(0) by a central stalk formed by the gamma and epsilon chains, while a peripheral stalk is formed by the delta and b chains.

The protein resides in the cell inner membrane. Key component of the proton channel; it plays a direct role in the translocation of protons across the membrane. This is ATP synthase subunit a from Shewanella sp. (strain ANA-3).